The following is an 858-amino-acid chain: Leucine--tRNA ligase (858 aa).

The short motif at 53–63 is the 'HIGH' region element; the sequence is PYPSGNLHMGH. The 'KMSKS' region signature appears at 622-626; sequence KMSKS. ATP is bound at residue Lys625.

The protein belongs to the class-I aminoacyl-tRNA synthetase family.

It localises to the cytoplasm. The enzyme catalyses tRNA(Leu) + L-leucine + ATP = L-leucyl-tRNA(Leu) + AMP + diphosphate. The chain is Leucine--tRNA ligase from Prochlorococcus marinus subsp. pastoris (strain CCMP1986 / NIES-2087 / MED4).